We begin with the raw amino-acid sequence, 165 residues long: RNA pyrophosphohydrolase (165 aa).

The Nudix hydrolase domain maps to 13 to 154 (PYRQGVGIML…KRPVYEQVVA (142 aa)). Positions 46-67 (GGIDAGEDPETAAWREMEEEIG) match the Nudix box motif.

Belongs to the Nudix hydrolase family. RppH subfamily. It depends on a divalent metal cation as a cofactor.

Accelerates the degradation of transcripts by removing pyrophosphate from the 5'-end of triphosphorylated RNA, leading to a more labile monophosphorylated state that can stimulate subsequent ribonuclease cleavage. The sequence is that of RNA pyrophosphohydrolase from Rhodospirillum rubrum (strain ATCC 11170 / ATH 1.1.1 / DSM 467 / LMG 4362 / NCIMB 8255 / S1).